Consider the following 90-residue polypeptide: Small ribosomal subunit protein uS15c (90 aa).

The protein belongs to the universal ribosomal protein uS15 family. Part of the 30S ribosomal subunit.

It is found in the plastid. The protein resides in the chloroplast. The protein is Small ribosomal subunit protein uS15c (rps15-A) of Pelargonium hortorum (Common geranium).